A 412-amino-acid chain; its full sequence is D-amino acid dehydrogenase 3 (412 aa).

4–18 (IVVIGAGIAGVSTAY) serves as a coordination point for FAD.

It belongs to the DadA oxidoreductase family. FAD is required as a cofactor.

It carries out the reaction a D-alpha-amino acid + A + H2O = a 2-oxocarboxylate + AH2 + NH4(+). In terms of biological role, oxidative deamination of D-amino acids. This Mesorhizobium japonicum (strain LMG 29417 / CECT 9101 / MAFF 303099) (Mesorhizobium loti (strain MAFF 303099)) protein is D-amino acid dehydrogenase 3 (dadA3).